A 446-amino-acid polypeptide reads, in one-letter code: Argininosuccinate lyase (446 aa).

This sequence belongs to the lyase 1 family. Argininosuccinate lyase subfamily.

Its subcellular location is the cytoplasm. The enzyme catalyses 2-(N(omega)-L-arginino)succinate = fumarate + L-arginine. It participates in amino-acid biosynthesis; L-arginine biosynthesis; L-arginine from L-ornithine and carbamoyl phosphate: step 3/3. This is Argininosuccinate lyase from Bacteroides thetaiotaomicron (strain ATCC 29148 / DSM 2079 / JCM 5827 / CCUG 10774 / NCTC 10582 / VPI-5482 / E50).